Reading from the N-terminus, the 294-residue chain is Sarcotoxin-2A (294 aa).

The N-terminal stretch at 1 to 22 is a signal peptide; sequence MKSFVFFAACMAIIALSSLVQA. Residues 23-24 constitute a propeptide, removed by a dipeptidylpeptidase; that stretch reads YP. Position 25 is a pyrrolidone carboxylic acid (Q25). Residue R293 is modified to Arginine amide.

Belongs to the attacin/sarcotoxin-2 family. Synthesized by the fat body and is eventually secreted into the hemolymph.

The protein resides in the secreted. Sarcotoxin II is an antibacterial protein which plays a role in the inflammatory response of this insect. The main effect of sarcotoxin II on E.coli may be the inhibition of cell wall synthesis, including septum formation. This Sarcophaga peregrina (Flesh fly) protein is Sarcotoxin-2A.